The primary structure comprises 63 residues: Large ribosomal subunit protein uL29 (63 aa).

Belongs to the universal ribosomal protein uL29 family.

The polypeptide is Large ribosomal subunit protein uL29 (Aliarcobacter butzleri (strain RM4018) (Arcobacter butzleri)).